A 160-amino-acid polypeptide reads, in one-letter code: Transcription elongation factor GreA (160 aa).

Residues 1 to 72 (MAEKTYPMTQ…QIQILETKIR (72 aa)) are a coiled coil.

This sequence belongs to the GreA/GreB family.

Functionally, necessary for efficient RNA polymerase transcription elongation past template-encoded arresting sites. The arresting sites in DNA have the property of trapping a certain fraction of elongating RNA polymerases that pass through, resulting in locked ternary complexes. Cleavage of the nascent transcript by cleavage factors such as GreA or GreB allows the resumption of elongation from the new 3'terminus. GreA releases sequences of 2 to 3 nucleotides. In Streptococcus agalactiae serotype Ia (strain ATCC 27591 / A909 / CDC SS700), this protein is Transcription elongation factor GreA.